An 874-amino-acid polypeptide reads, in one-letter code: Alanine--tRNA ligase (874 aa).

Zn(2+)-binding residues include H562, H566, C664, and H668.

It belongs to the class-II aminoacyl-tRNA synthetase family. Zn(2+) is required as a cofactor.

Its subcellular location is the cytoplasm. The catalysed reaction is tRNA(Ala) + L-alanine + ATP = L-alanyl-tRNA(Ala) + AMP + diphosphate. Functionally, catalyzes the attachment of alanine to tRNA(Ala) in a two-step reaction: alanine is first activated by ATP to form Ala-AMP and then transferred to the acceptor end of tRNA(Ala). Also edits incorrectly charged Ser-tRNA(Ala) and Gly-tRNA(Ala) via its editing domain. The chain is Alanine--tRNA ligase from Shewanella sp. (strain ANA-3).